The following is a 358-amino-acid chain: DNA polymerase IV (358 aa).

The UmuC domain occupies 4 to 185 (IIHIDMDCYF…LSLRKIPGVG (182 aa)). Positions 8 and 103 each coordinate Mg(2+). Glutamate 104 is a catalytic residue.

It belongs to the DNA polymerase type-Y family. Monomer. It depends on Mg(2+) as a cofactor.

It localises to the cytoplasm. It catalyses the reaction DNA(n) + a 2'-deoxyribonucleoside 5'-triphosphate = DNA(n+1) + diphosphate. In terms of biological role, poorly processive, error-prone DNA polymerase involved in untargeted mutagenesis. Copies undamaged DNA at stalled replication forks, which arise in vivo from mismatched or misaligned primer ends. These misaligned primers can be extended by PolIV. Exhibits no 3'-5' exonuclease (proofreading) activity. May be involved in translesional synthesis, in conjunction with the beta clamp from PolIII. The polypeptide is DNA polymerase IV (Shewanella sp. (strain W3-18-1)).